A 275-amino-acid chain; its full sequence is Stage 0 sporulation protein YaaT (275 aa).

Positions 61-146 (RKVIRVADDR…FKTRIELRQI (86 aa)) constitute a PSP1 C-terminal domain.

Its subcellular location is the cytoplasm. In terms of biological role, essential for the phosphorelay during initiation of sporulation. May control the level of phosphorylated spo0A through spo0E activity during sporulation. The protein is Stage 0 sporulation protein YaaT (yaaT) of Bacillus subtilis (strain 168).